The following is an 807-amino-acid chain: Spondin-1 (807 aa).

Residues 1–28 (MRLSPAPLRLSRGPALLALALPLAAALA) form the signal peptide. The Reelin domain occupies 29–194 (FSDETLDKVA…DPTLDGVTDR (166 aa)). 17 disulfides stabilise this stretch: Cys-44/Cys-128, Cys-156/Cys-182, Cys-199/Cys-336, Cys-200/Cys-340, Cys-202/Cys-415, Cys-443/Cys-480, Cys-454/Cys-489, Cys-459/Cys-494, Cys-502/Cys-538, Cys-513/Cys-517, Cys-548/Cys-554, Cys-559/Cys-595, Cys-570/Cys-574, Cys-605/Cys-610, Cys-615/Cys-650, Cys-626/Cys-630, and Cys-660/Cys-665. Positions 195 to 388 (PILDCCACGT…LTSLDHPQSP (194 aa)) constitute a Spondin domain. An N-linked (GlcNAc...) asparagine glycan is attached at Asn-214. Residues Asp-325, Asp-354, and Asp-358 each coordinate Ca(2+). 5 consecutive TSP type-1 domains span residues 442–495 (TCIY…PGCS), 501–555 (TCTM…EECS), 558–611 (SCLV…PECH), 614–666 (PCLL…PECP), and 668–721 (DCEL…RKCL). A glycan (N-linked (GlcNAc...) asparagine) is linked at Asn-681. Basic and acidic residues predominate over residues 732-746 (REARESRRSEQLREE). Residues 732-752 (REARESRRSEQLREESDGEQF) are disordered. Residues 754-806 (GCRMRPWTAWSECTKLCGGGIQERYMTVKKRFKSSQFTSCKDKKEIRACNVHP) enclose the TSP type-1 6 domain.

As to quaternary structure, binds to the central extracellular domain of APP and inhibits beta-secretase cleavage of APP. Expressed at high levels in the floor plate.

Its subcellular location is the secreted. It localises to the extracellular space. The protein localises to the extracellular matrix. Its function is as follows. Cell adhesion protein that promotes the attachment of spinal cord and sensory neuron cells and the outgrowth of neurites in vitro. May contribute to the growth and guidance of axons in both the spinal cord and the PNS. The sequence is that of Spondin-1 (Spon1) from Rattus norvegicus (Rat).